The sequence spans 526 residues: PTS system alpha-glucoside-specific EIICB component (526 aa).

Positions 1–417 constitute a PTS EIIC type-1 domain; it reads MLKHFQRLGG…YNVKTSGRED (417 aa). 12 helical membrane-spanning segments follow: residues 12–32, 59–79, 88–108, 132–152, 173–193, 200–220, 224–244, 274–294, 305–325, 330–350, 355–375, and 381–401; these read LFAP…TIIL, GWTV…IGLA, LAVL…LTFW, IKTL…TIYI, LVSA…CLVW, ISSL…LYTF, ILIP…GPAV, GGFA…ALAM, IVSG…ITEP, FLFI…TMAA, FGVV…WLPL, and GVMF…YLVF. Positions 447–526 constitute a PTS EIIB type-1 domain; it reads SGKAKAFLEA…ESFENLMEQN (80 aa). The active-site Phosphocysteine intermediate; for EIIB activity is the Cys-469.

It localises to the cell membrane. The phosphoenolpyruvate-dependent sugar phosphotransferase system (sugar PTS), a major carbohydrate active -transport system, catalyzes the phosphorylation of incoming sugar substrates concomitantly with their translocation across the cell membrane. This system is involved in alpha-glucoside transport. The polypeptide is PTS system alpha-glucoside-specific EIICB component (malB) (Fusobacterium mortiferum).